A 395-amino-acid polypeptide reads, in one-letter code: Probable inactive serine/threonine-protein kinase DDB_G0293746 (395 aa).

One can recognise a Protein kinase domain in the interval 9–395 (YSEIDLISDN…ITQFIIDYLF (387 aa)). ATP contacts are provided by residues 15–23 (ISDNPFKNY) and lysine 54. The tract at residues 213-266 (NSSLSSLSSSTSSSSSSSSSTNCNNNTTENNNNNYNNNNNNNNNNNNNNNNNSL) is disordered.

Belongs to the protein kinase superfamily. Ser/Thr protein kinase family.

The polypeptide is Probable inactive serine/threonine-protein kinase DDB_G0293746 (Dictyostelium discoideum (Social amoeba)).